The sequence spans 610 residues: Zinc finger protein 823 (610 aa).

The 94-residue stretch at 4 to 97 (VAFEDVAVNF…VNKNTPRVNP (94 aa)) folds into the KRAB domain. 10 C2H2-type zinc fingers span residues 164-186 (FDCK…MAAH), 192-214 (YKCK…ERTH), 220-242 (YECK…ERIH), 248-270 (YECK…ERTH), 276-298 (YKCT…ERTH), 304-326 (YACK…MIRH), 332-354 (HKCK…ETTH), 360-382 (YECK…MITH), 388-410 (QKCK…ERTH), and 416-438 (YQCK…EATH). Residues 444–465 (YKCQCGKAFSDLSSFQNHETTH) form a C2H2-type 11; atypical zinc finger. 5 C2H2-type zinc fingers span residues 471-493 (YECK…KRTH), 499-521 (YECK…ERIH), 527-549 (YECK…ERIH), 555-577 (YECL…EKTH), and 583-605 (YECK…KRTH).

This sequence belongs to the krueppel C2H2-type zinc-finger protein family.

It is found in the nucleus. Its function is as follows. May be involved in transcriptional regulation. The chain is Zinc finger protein 823 (ZNF823) from Homo sapiens (Human).